The following is a 446-amino-acid chain: Putative ankyrin repeat protein L273 (446 aa).

ANK repeat units lie at residues 71–100 (NGEF…KSNM), 124–153 (DHNK…RMRP), 206–237 (TDIE…KILM), 245–277 (VWVS…KMHV), 303–332 (ELEY…NSYY), and 365–394 (YTDI…QQII).

The protein is Putative ankyrin repeat protein L273 of Acanthamoeba polyphaga (Amoeba).